The chain runs to 580 residues: Pescadillo homolog (580 aa).

The segment covering 291–303 has biased composition (acidic residues); sequence EPEEENEVDEFPA. The disordered stretch occupies residues 291 to 321; that stretch reads EPEEENEVDEFPADPENAGQEEEQKKQLQEE. Positions 312-321 are enriched in basic and acidic residues; sequence EEQKKQLQEE. In terms of domain architecture, BRCT spans 323 to 416; it reads KHKSMFVGLK…MLLPVEDYFP (94 aa). A disordered region spans residues 448–496; sequence KGENPEDDDDDDEEDDEDEEEDDEDEDDEENEEEEEDKKLRHLENKKVG. Residues 452-483 show a composition bias toward acidic residues; that stretch reads PEDDDDDDEEDDEDEEEDDEDEDDEENEEEEE. Positions 484 to 494 are enriched in basic and acidic residues; it reads DKKLRHLENKK.

The protein belongs to the pescadillo family. Component of the PeBoW complex, composed of bop1, pes1 and wdr12. The complex is held together by bop1, which interacts with pes1 via its N-terminal domain and with wdr12 via a high-affinity interaction between the seven-bladed beta-propeller domains of the 2 proteins. The PeBoW complex associates with the 66S pre-ribosome.

It is found in the nucleus. The protein localises to the nucleolus. Its subcellular location is the nucleoplasm. Functionally, component of the PeBoW complex, which is required for maturation of 28S and 5.8S ribosomal RNAs and formation of the 60S ribosome. The chain is Pescadillo homolog (pes1) from Xenopus tropicalis (Western clawed frog).